The following is a 181-amino-acid chain: MVQRLKTVYEQEVIKQLMTRFQYKNIHEVPKLKKITVNRGLGEAAQNAKILEASVKEITEITGQKAIVTRAKKAIAGFKLRQDMPIGVMVTLRGDYMYAFLDRLINLSLPRIRDFRGITAKSFDGRGNYNLGLKEQLIFPEVDYDGIEQIRGMDISIVTTAKTDQEGLALLKSLGMPFAES.

Belongs to the universal ribosomal protein uL5 family. As to quaternary structure, part of the 50S ribosomal subunit; contacts the 5S rRNA.

Its subcellular location is the plastid. It localises to the cyanelle. Functionally, binds 5S rRNA, forms part of the central protuberance of the 50S subunit. This is Large ribosomal subunit protein uL5c (rpl5) from Cyanophora paradoxa.